Reading from the N-terminus, the 124-residue chain is Modulator protein MzrA (124 aa).

At 1-7 (MINRRMK) the chain is on the cytoplasmic side. A helical membrane pass occupies residues 8–28 (TGFVFHLLLLLLPLVVLVTSS). Residues 29-124 (RRTADDVTLH…KLSQQPFKLG (96 aa)) lie on the Periplasmic side of the membrane.

Belongs to the MzrA family. In terms of assembly, interacts with EnvZ.

It localises to the cell inner membrane. Its function is as follows. Modulates the activity of the EnvZ/OmpR two-component regulatory system, probably by directly modulating EnvZ enzymatic activity and increasing stability of phosphorylated OmpR. The chain is Modulator protein MzrA from Musicola paradisiaca (strain Ech703) (Dickeya paradisiaca).